A 152-amino-acid chain; its full sequence is Leukocyte-associated immunoglobulin-like receptor 2 (152 aa).

Residues 1–21 form the signal peptide; sequence MSPHLTALLGLVLCLAQTIHT. One can recognise an Ig-like C2-type domain in the interval 29 to 117; it reads PSISAEPGTV…GWSEHSDFLE (89 aa). An intrachain disulfide couples cysteine 49 to cysteine 101. The tract at residues 120–152 is disordered; the sequence is VKESSGGPDSPDTEPGSSAGTVPGTEASGFDAP.

It localises to the secreted. In Homo sapiens (Human), this protein is Leukocyte-associated immunoglobulin-like receptor 2 (LAIR2).